The sequence spans 451 residues: Homeobox protein meis3-B (451 aa).

Residues His-33–Lys-64 form a disordered region. A compositionally biased stretch (polar residues) spans His-34–Gly-43. The MEIS N-terminal domain maps to Gly-102–Asp-185. Residues Asn-206–Gly-272 are disordered. Residues Ser-218 to Gly-230 show a composition bias toward low complexity. The segment covering Leu-231–Gln-242 has biased composition (polar residues). A DNA-binding region (homeobox) is located at residues Arg-267 to Met-329.

Belongs to the TALE/MEIS homeobox family.

It is found in the nucleus. A caudalizing protein which is required to pattern the anterior/posterior (A/P) axis during central nervous system (CNS) formation. Inhibits anterior neural expression and acts as a transcriptional activator to induce posterior neural gene expression. Maintains a proper A/P balance required for hindbrain formation by activating the FGF/MAPK pathway, which modulates the planar cell polarity (PCP) pathway. Interacts with retinoid signaling during hindbrain patterning. The chain is Homeobox protein meis3-B (meis3-b) from Xenopus laevis (African clawed frog).